We begin with the raw amino-acid sequence, 947 residues long: DNA mismatch repair protein MutS 2 (947 aa).

The interval 623 to 643 (IPNDTHLGSGPVPASRDGSDD) is disordered. 659-666 (GPNMSGKS) lines the ATP pocket. Residues 841–916 (AETADTGVEA…GAAAEDELPE (76 aa)) are disordered.

This sequence belongs to the DNA mismatch repair MutS family.

Its function is as follows. This protein is involved in the repair of mismatches in DNA. It is possible that it carries out the mismatch recognition step. This protein has a weak ATPase activity. The sequence is that of DNA mismatch repair protein MutS 2 from Haloarcula marismortui (strain ATCC 43049 / DSM 3752 / JCM 8966 / VKM B-1809) (Halobacterium marismortui).